A 423-amino-acid chain; its full sequence is Lipoamide acyltransferase component of branched-chain alpha-keto acid dehydrogenase complex (423 aa).

The Lipoyl-binding domain maps to 3 to 78 (THVIKMPDIG…AVGSELIRIE (76 aa)). Position 44 is an N6-lipoyllysine (lysine 44). In terms of domain architecture, Peripheral subunit-binding (PSBD) spans 137–174 (LASPAVRKRALDAGIELRYVHGSGPAGRILHEDLDAFM). Residues histidine 395 and aspartate 399 contribute to the active site.

Belongs to the 2-oxoacid dehydrogenase family. As to quaternary structure, forms a 24-polypeptide structural core with octahedral symmetry. (R)-lipoate is required as a cofactor.

It carries out the reaction N(6)-[(R)-dihydrolipoyl]-L-lysyl-[protein] + 2-methylpropanoyl-CoA = N(6)-[(R)-S(8)-2-methylpropanoyldihydrolipoyl]-L-lysyl-[protein] + CoA. Its function is as follows. The branched-chain alpha-keto dehydrogenase complex catalyzes the overall conversion of alpha-keto acids to acyl-CoA and CO(2). It contains multiple copies of three enzymatic components: branched-chain alpha-keto acid decarboxylase (E1), lipoamide acyltransferase (E2) and lipoamide dehydrogenase (E3). The protein is Lipoamide acyltransferase component of branched-chain alpha-keto acid dehydrogenase complex (bkdB) of Pseudomonas putida (Arthrobacter siderocapsulatus).